We begin with the raw amino-acid sequence, 106 residues long: Iron-sulfur cluster assembly protein CyaY (106 aa).

Belongs to the frataxin family.

In terms of biological role, involved in iron-sulfur (Fe-S) cluster assembly. May act as a regulator of Fe-S biogenesis. The sequence is that of Iron-sulfur cluster assembly protein CyaY from Escherichia coli O127:H6 (strain E2348/69 / EPEC).